The primary structure comprises 550 residues: Probable asparagine synthetase [glutamine-hydrolyzing] (550 aa).

The active-site For GATase activity is the C2. The region spanning 2-189 (CGIICFIQYG…PNQYVTIDLS (188 aa)) is the Glutamine amidotransferase type-2 domain. Residues 53-57 (RLAIM), 78-80 (NGE), and D100 contribute to the L-glutamine site. Positions 213 to 530 (YYQSHKSLID…GGRDHIIPHY (318 aa)) constitute an Asparagine synthetase domain. ATP-binding positions include L256, V284, and 360–361 (SG).

The catalysed reaction is L-aspartate + L-glutamine + ATP + H2O = L-asparagine + L-glutamate + AMP + diphosphate + H(+). It participates in amino-acid biosynthesis; L-asparagine biosynthesis; L-asparagine from L-aspartate (L-Gln route): step 1/1. The polypeptide is Probable asparagine synthetase [glutamine-hydrolyzing] (Acanthamoeba polyphaga mimivirus (APMV)).